A 350-amino-acid polypeptide reads, in one-letter code: DNA-directed RNA polymerase subunit alpha (350 aa).

The alpha N-terminal domain (alpha-NTD) stretch occupies residues 1–226 (MLISQRPTLS…ELFGLARELN (226 aa)). Residues 241-350 (ADHIASFALP…NQDYAETEQL (110 aa)) form an alpha C-terminal domain (alpha-CTD) region. The disordered stretch occupies residues 328 to 350 (GTWTSDAGYDLDDNQDYAETEQL). Acidic residues predominate over residues 336 to 350 (YDLDDNQDYAETEQL).

This sequence belongs to the RNA polymerase alpha chain family. Homodimer. The RNAP catalytic core consists of 2 alpha, 1 beta, 1 beta' and 1 omega subunit. When a sigma factor is associated with the core the holoenzyme is formed, which can initiate transcription.

It catalyses the reaction RNA(n) + a ribonucleoside 5'-triphosphate = RNA(n+1) + diphosphate. Functionally, DNA-dependent RNA polymerase catalyzes the transcription of DNA into RNA using the four ribonucleoside triphosphates as substrates. The protein is DNA-directed RNA polymerase subunit alpha of Mycolicibacterium smegmatis (strain ATCC 700084 / mc(2)155) (Mycobacterium smegmatis).